Here is a 131-residue protein sequence, read N- to C-terminus: Ribosome-binding factor A (131 aa).

It belongs to the RbfA family. Monomer. Binds 30S ribosomal subunits, but not 50S ribosomal subunits or 70S ribosomes.

Its subcellular location is the cytoplasm. Its function is as follows. One of several proteins that assist in the late maturation steps of the functional core of the 30S ribosomal subunit. Associates with free 30S ribosomal subunits (but not with 30S subunits that are part of 70S ribosomes or polysomes). Required for efficient processing of 16S rRNA. May interact with the 5'-terminal helix region of 16S rRNA. This chain is Ribosome-binding factor A, found in Pseudomonas fluorescens (strain SBW25).